The following is a 479-amino-acid chain: Aspartyl/glutamyl-tRNA(Asn/Gln) amidotransferase subunit B (479 aa).

Belongs to the GatB/GatE family. GatB subfamily. As to quaternary structure, heterotrimer of A, B and C subunits.

The catalysed reaction is L-glutamyl-tRNA(Gln) + L-glutamine + ATP + H2O = L-glutaminyl-tRNA(Gln) + L-glutamate + ADP + phosphate + H(+). It carries out the reaction L-aspartyl-tRNA(Asn) + L-glutamine + ATP + H2O = L-asparaginyl-tRNA(Asn) + L-glutamate + ADP + phosphate + 2 H(+). Its function is as follows. Allows the formation of correctly charged Asn-tRNA(Asn) or Gln-tRNA(Gln) through the transamidation of misacylated Asp-tRNA(Asn) or Glu-tRNA(Gln) in organisms which lack either or both of asparaginyl-tRNA or glutaminyl-tRNA synthetases. The reaction takes place in the presence of glutamine and ATP through an activated phospho-Asp-tRNA(Asn) or phospho-Glu-tRNA(Gln). This Deinococcus radiodurans (strain ATCC 13939 / DSM 20539 / JCM 16871 / CCUG 27074 / LMG 4051 / NBRC 15346 / NCIMB 9279 / VKM B-1422 / R1) protein is Aspartyl/glutamyl-tRNA(Asn/Gln) amidotransferase subunit B.